Consider the following 658-residue polypeptide: Sulfate transporter 3.1 (658 aa).

Residues 1-85 lie on the Cytoplasmic side of the membrane; sequence MGTEDYTFPQ…RYNLKFFKSD (85 aa). Residues 86-106 form a helical membrane-spanning segment; that stretch reads LIAGITIASLAIPQGISYAKL. Topologically, residues 107 to 108 are extracellular; sequence AN. The helical transmembrane segment at 109–129 threads the bilayer; sequence LPPILGLYSSFVPPLVYAVLG. Residues 130–133 are Cytoplasmic-facing; that stretch reads SSRD. A helical membrane pass occupies residues 134–154; it reads LAVGTVAVASLLTGAMLSKEV. The Extracellular segment spans residues 155-163; sequence DAEKDPKLY. Residues 164–184 traverse the membrane as a helical segment; it reads LHLAFTATFFAGVLEASLGIF. Arginine 185 is a topological domain (cytoplasmic). The helical transmembrane segment at 186-206 threads the bilayer; sequence LGFIVDFLSHATIVGFMGGAA. The Extracellular segment spans residues 207–245; sequence TVVSLQQLKGIFGLKHFTDSTDVISVMRSVFSQTHEWRW. A helical membrane pass occupies residues 246–266; that stretch reads ESGVLGCGFLFFLLSTRYFSI. The Cytoplasmic segment spans residues 267-271; the sequence is KKPKF. A helical transmembrane segment spans residues 272-292; sequence FWVAAMAPLTSVILGSLLVYF. Over 293-332 the chain is Extracellular; it reads THAERHGVQVIGDLKKGLNPLSGSDLIFTSPYMSTAVKTG. Residues 333–353 form a helical membrane-spanning segment; it reads LITGIIALAEGVAVGRSFAMF. Topologically, residues 354–363 are cytoplasmic; it reads KNYNIDGNKE. A helical membrane pass occupies residues 364–384; the sequence is MIAFGMMNIVGSFTSCYLTTG. Over 385–398 the chain is Extracellular; it reads PFSRSAVNYNAGCK. The helical transmembrane segment at 399-419 threads the bilayer; that stretch reads TAMSNIVMAIAVMFTLLFLTP. Residues 420-425 lie on the Cytoplasmic side of the membrane; it reads LFHYTP. The helical transmembrane segment at 426 to 446 threads the bilayer; that stretch reads LVVLSAIIISAMLGLIDYQAA. At 447–464 the chain is on the extracellular side; sequence IHLWKVDKFDFLVCMSAY. The helical transmembrane segment at 465–485 threads the bilayer; it reads VGVVFGSVEIGLVVAVAISIA. Topologically, residues 486–658 are cytoplasmic; the sequence is RLLLFVSRPK…ASKNEPWNNV (173 aa). The STAS domain occupies 513–637; sequence QYPSSRTVPG…LTVGEAVEAC (125 aa).

This sequence belongs to the SLC26A/SulP transporter (TC 2.A.53) family. As to expression, expressed only in leaves.

Its subcellular location is the membrane. In terms of biological role, h(+)/sulfate cotransporter that may play a role in the regulation of sulfate assimilation. The sequence is that of Sulfate transporter 3.1 (SULTR3;1) from Arabidopsis thaliana (Mouse-ear cress).